The sequence spans 1136 residues: 3-O-alpha-D-galactosyl-alpha-L-arabinofuranosidase (1136 aa).

Positions 1-36 are cleaved as a signal peptide; sequence MGISRNRLVPGLVGLAASAAIVLPLGIGMPVSSATA. The active-site Proton donor is the E194. The active-site Nucleophile is the E321. 2 CBM6 domains span residues 521-656 and 669-779; these read QAIE…LLLY and VTYP…VTTA. The BIG2 domain maps to 987 to 1045; sequence KASLKVGETLSLNASVTPDSVADKTVQWTSSDEQVATVDEHGVVKGVKAGTVTITATSV. The interval 1049 to 1104 is disordered; sequence SRSGSVEVTVAEDSEQKPSGGDGDNNGEQTGKPDGNTGGQTSDSDAGADSGNNQKH. The span at 1087-1103 shows a compositional bias: polar residues; it reads GQTSDSDAGADSGNNQK. Residues 1109–1129 form a helical membrane-spanning segment; that stretch reads GAAVAAVAGVAVLLAGAGLLL.

Belongs to the glycosyl hydrolase 39 family.

The protein resides in the cell membrane. It is found in the secreted. Its subcellular location is the cell wall. It catalyses the reaction Hydrolysis of alpha-D-Galp-(1-&gt;3)-L-Araf disaccharides from non-reducing terminals in branches of type II arabinogalactan attached to proteins.. Functionally, hydrolase involved in the degradation of the gum arabic arabinogalactan protein (AGP). Catalyzes the release of 3-O-alpha-D-galactopyranosyl-L-arabinose (alpha-D-Galp-(1-&gt;3)-L-Ara) from gum arabic AGP. Can also release 3-O-beta-L-arabinopyranosyl-L-arabinose (beta-L-Arap-(1-&gt;3)-L-Ara) from gum arabic AGP and larch AGP, but the alpha-D-Galp-(1-&gt;3)-L-Ara release activity is 594-fold higher than the beta-L-Arap-(1-&gt;3)-L-Ara release activity. Exhibits no reactivity toward p-nitrophenyl (pNP)-alpha-Araf or any other tested pNP substrate. Plays a crucial role in gum arabic AGP assimilation in B.longum. This chain is 3-O-alpha-D-galactosyl-alpha-L-arabinofuranosidase, found in Bifidobacterium longum subsp. longum.